The following is a 388-amino-acid chain: Phosphoglycerate kinase (388 aa).

Substrate contacts are provided by residues 21 to 23 (DLN), Arg-36, 59 to 62 (HLGR), Arg-114, and Arg-147. ATP contacts are provided by residues Lys-198, Glu-315, and 341-344 (GGDT).

This sequence belongs to the phosphoglycerate kinase family. As to quaternary structure, monomer.

The protein localises to the cytoplasm. The enzyme catalyses (2R)-3-phosphoglycerate + ATP = (2R)-3-phospho-glyceroyl phosphate + ADP. It participates in carbohydrate degradation; glycolysis; pyruvate from D-glyceraldehyde 3-phosphate: step 2/5. This Hahella chejuensis (strain KCTC 2396) protein is Phosphoglycerate kinase.